Here is an 837-residue protein sequence, read N- to C-terminus: Espin (837 aa).

ANK repeat units follow at residues 1–31, 35–66, 69–99, 103–132, 137–167, 171–201, 205–235, 238–267, and 270–299; these read MALE…GPSL, LDAL…AVSR, NGAT…RVQE, SGAT…ANSA, TGAL…GVNA, NGAT…DPHL, DGMT…SFEQ, DGAT…EISQ, and WGGT…GLDV. Phosphoserine is present on residues Ser337 and Ser341. The span at 339–348 shows a compositional bias: basic and acidic residues; that stretch reads DPSMDLEAKQ. 4 disordered regions span residues 339-459, 477-712, 745-767, and 785-816; these read DPSM…VGLH, DSLK…PATL, KLQQ…EARL, and EREQ…TLGY. The span at 351 to 364 shows a compositional bias: polar residues; that stretch reads SGMSSPNTTMSVQP. Residues 376-395 show a composition bias toward low complexity; sequence LSNYDSCSSSHSSSKGQRST. Phosphoserine occurs at positions 400 and 401. Residues 423–455 are compositionally biased toward pro residues; the sequence is SLPPPPPPSFPPPPPPGTQLPPPPPGYPAPNPP. 3 positions are modified to phosphoserine: Ser497, Ser504, and Ser531. Residues 581-604 are compositionally biased toward pro residues; the sequence is LPPPPPPPPLPEALSSPPPAPPLP. Residues 617–626 are compositionally biased toward low complexity; the sequence is SSSSTGSTKS. Composition is skewed to polar residues over residues 627–636 and 651–662; these read FNMMSPTGDN and PTPQSKGLTTVF. Ser631 is modified (phosphoserine). The WH2 domain maps to 635–652; it reads DNSELLAEIKAGKSLKPT. The segment covering 663–673 has biased composition (low complexity); the sequence is SGSGQPASQPE. Phosphoserine occurs at positions 670, 674, and 680. A coiled-coil region spans residues 738-814; that stretch reads KRQVMVRKLQ…KEQSEKLRTL (77 aa).

Monomer. Interacts with PFN2. Binds F-actin in a Ca(2+)-resistant fashion. Interacts (via N-terminal) with BAIAP2 (via SH3-domain). Interacts with MYO3A (via C-terminus). Interacts with MYO3B (via C-terminus). In terms of tissue distribution, expressed at high concentration in the microvillar parallel actin bundle (PAB) of hair cells stereocilia in the cochlea and vestibular system. Detected also at high levels of a number of other sensory cell types, including taste receptor cells, solitary chemoreceptor cells, vomeronasal sensory neurons and Merkel cells. Isoform 1 is detected in testis. Isoforms 2 is detected in small intestine and kidney (at protein level). Isoforms 3, 4, 6 and 8 are expressed in Purkinje cells dendritic spines.

The protein resides in the cytoplasm. It localises to the cytoskeleton. Its subcellular location is the cell projection. The protein localises to the stereocilium. It is found in the microvillus. The protein resides in the cell junction. It localises to the dendritic spine. Multifunctional actin-bundling protein. Plays a major role in regulating the organization, dimension, dynamics and signaling capacities of the actin filament-rich microvilli in the mechanosensory and chemosensory cells. Required for the assembly and stabilization of the stereociliary parallel actin bundles. Plays a crucial role in the formation and maintenance of inner ear hair cell stereocilia. Involved in the elongation of actin in stereocilia. In extrastriolar hair cells, required for targeting MYO3B to stereocilia tips, and for regulation of stereocilia diameter and staircase formation. In Rattus norvegicus (Rat), this protein is Espin (Espn).